The primary structure comprises 101 residues: uncharacterized protein (101 aa).

The signal sequence occupies residues 1 to 25 (MRKKRLLSRISFSSLFLLCGTLLSA). Cys26 carries the N-palmitoyl cysteine lipid modification. Cys26 carries S-diacylglycerol cysteine lipidation.

The protein belongs to the MG439/MG440 family.

It localises to the cell membrane. This is an uncharacterized protein from Mycoplasma pneumoniae (strain ATCC 29342 / M129 / Subtype 1) (Mycoplasmoides pneumoniae).